The primary structure comprises 275 residues: 2,3,4,5-tetrahydropyridine-2,6-dicarboxylate N-succinyltransferase (275 aa).

The substrate site is built by R105 and D142.

The protein belongs to the transferase hexapeptide repeat family. In terms of assembly, homotrimer.

Its subcellular location is the cytoplasm. It carries out the reaction (S)-2,3,4,5-tetrahydrodipicolinate + succinyl-CoA + H2O = (S)-2-succinylamino-6-oxoheptanedioate + CoA. It functions in the pathway amino-acid biosynthesis; L-lysine biosynthesis via DAP pathway; LL-2,6-diaminopimelate from (S)-tetrahydrodipicolinate (succinylase route): step 1/3. In Histophilus somni (strain 129Pt) (Haemophilus somnus), this protein is 2,3,4,5-tetrahydropyridine-2,6-dicarboxylate N-succinyltransferase.